The chain runs to 366 residues: Actin-like protein 8 (366 aa).

Belongs to the actin family. Strongly expressed in testis and pancreas. Weak expression in placenta.

It is found in the cytoplasm. Its subcellular location is the cytoskeleton. The polypeptide is Actin-like protein 8 (ACTL8) (Homo sapiens (Human)).